The primary structure comprises 468 residues: Proline--tRNA ligase (468 aa).

Belongs to the class-II aminoacyl-tRNA synthetase family. ProS type 3 subfamily. As to quaternary structure, homodimer.

The protein resides in the cytoplasm. It carries out the reaction tRNA(Pro) + L-proline + ATP = L-prolyl-tRNA(Pro) + AMP + diphosphate. In terms of biological role, catalyzes the attachment of proline to tRNA(Pro) in a two-step reaction: proline is first activated by ATP to form Pro-AMP and then transferred to the acceptor end of tRNA(Pro). This is Proline--tRNA ligase from Frankia casuarinae (strain DSM 45818 / CECT 9043 / HFP020203 / CcI3).